A 150-amino-acid chain; its full sequence is Avidin-related protein 1 (150 aa).

The first 24 residues, 1–24, serve as a signal peptide directing secretion; the sequence is MVHATSPLLLLLLLSLALVAPGLS. Positions 26-147 constitute an Avidin-like domain; sequence RKCSLTGKWD…GNNDFTRQRT (122 aa). C28 and C105 are oxidised to a cystine. The biotin site is built by N36 and S40. The N-linked (GlcNAc...) asparagine glycan is linked to N54. Positions 57, 59, and 63 each coordinate biotin. Residues N67 and N93 are each glycosylated (N-linked (GlcNAc...) asparagine). Residues S95, S99, and N140 each coordinate biotin.

The protein belongs to the avidin/streptavidin family. Homotetramer. In terms of processing, glycosylated.

The protein localises to the secreted. Forms a strong non-covalent specific complex with biotin. The sequence is that of Avidin-related protein 1 (AVR1) from Gallus gallus (Chicken).